The primary structure comprises 382 residues: Mannitol-1-phosphate 5-dehydrogenase (382 aa).

3 to 14 (ALHFGAGNIGRG) is an NAD(+) binding site.

The protein belongs to the mannitol dehydrogenase family.

The catalysed reaction is D-mannitol 1-phosphate + NAD(+) = beta-D-fructose 6-phosphate + NADH + H(+). This Salmonella newport (strain SL254) protein is Mannitol-1-phosphate 5-dehydrogenase.